The following is a 176-amino-acid chain: Peptide methionine sulfoxide reductase MsrA (176 aa).

Residue cysteine 14 is part of the active site.

Belongs to the MsrA Met sulfoxide reductase family.

It catalyses the reaction L-methionyl-[protein] + [thioredoxin]-disulfide + H2O = L-methionyl-(S)-S-oxide-[protein] + [thioredoxin]-dithiol. The catalysed reaction is [thioredoxin]-disulfide + L-methionine + H2O = L-methionine (S)-S-oxide + [thioredoxin]-dithiol. In terms of biological role, has an important function as a repair enzyme for proteins that have been inactivated by oxidation. Catalyzes the reversible oxidation-reduction of methionine sulfoxide in proteins to methionine. This chain is Peptide methionine sulfoxide reductase MsrA, found in Halalkalibacterium halodurans (strain ATCC BAA-125 / DSM 18197 / FERM 7344 / JCM 9153 / C-125) (Bacillus halodurans).